We begin with the raw amino-acid sequence, 179 residues long: Large ribosomal subunit protein uL5 (179 aa).

This sequence belongs to the universal ribosomal protein uL5 family. In terms of assembly, part of the 50S ribosomal subunit; part of the 5S rRNA/L5/L18/L25 subcomplex. Contacts the 5S rRNA and the P site tRNA. Forms a bridge to the 30S subunit in the 70S ribosome.

In terms of biological role, this is one of the proteins that bind and probably mediate the attachment of the 5S RNA into the large ribosomal subunit, where it forms part of the central protuberance. In the 70S ribosome it contacts protein S13 of the 30S subunit (bridge B1b), connecting the 2 subunits; this bridge is implicated in subunit movement. Contacts the P site tRNA; the 5S rRNA and some of its associated proteins might help stabilize positioning of ribosome-bound tRNAs. The polypeptide is Large ribosomal subunit protein uL5 (Desulfatibacillum aliphaticivorans).